Here is a 715-residue protein sequence, read N- to C-terminus: Tegument protein UL46 (715 aa).

Disordered stretches follow at residues 432 to 513 (WSAG…CAAQ), 585 to 605 (DDARRKATHAASARERHAPYE), and 659 to 680 (GSALFSPPPRPPPPPPLSPSPV). Residues 444-455 (GPGGHRAGGGTV) show a composition bias toward gly residues. 2 stretches are compositionally biased toward low complexity: residues 456 to 467 (GKRFSGPARQRA) and 475 to 488 (PTLDPRGHPAVPEA). A compositionally biased stretch (pro residues) spans 664-677 (SPPPRPPPPPPLSP).

This sequence belongs to the herpesviridae HHV-1 VP11/12 protein family. In terms of assembly, interacts with VP16. Interacts with host LCK, PIK3R1, SHC1 AND GRB2; these interactions promote the activation of the PI3K/AKT pathway. Interacts with host YWHAB. Interacts with ICP0; this interaction targets UL46 for degradation by the proteasome. Phosphorylated by host LCK. The phosphorylation seems to be lymphocyte-specific.

The protein resides in the virion tegument. It localises to the host cell membrane. In terms of biological role, plays a role in the activation of the host PI3K/AKT pathway to promote cell survival. Interacts with and activates host LCK and thereby recruits downstream partners SHC1, GRB2 and PI3KR1 in order to activate the PI3K pathway by phosphorylating host AKT on its activating residues. This mechanism is inhibited by the viral protein US3 that instead promotes incorporation of UL46 into virions. In Human herpesvirus 1 (strain F) (HHV-1), this protein is Tegument protein UL46.